A 198-amino-acid chain; its full sequence is Fe/S biogenesis protein NfuA (198 aa).

The [4Fe-4S] cluster site is built by cysteine 155 and cysteine 158.

This sequence belongs to the NfuA family. As to quaternary structure, homodimer. The cofactor is [4Fe-4S] cluster.

Its function is as follows. Involved in iron-sulfur cluster biogenesis. Binds a 4Fe-4S cluster, can transfer this cluster to apoproteins, and thereby intervenes in the maturation of Fe/S proteins. Could also act as a scaffold/chaperone for damaged Fe/S proteins. The chain is Fe/S biogenesis protein NfuA from Haemophilus influenzae (strain 86-028NP).